The sequence spans 697 residues: MLLPLLLSSLLGGSQAMDGRFWIRVQESVMVPEGLCISVPCSFSYPRQDWTGSTPAYGYWFKAVTETTKGAPVATNHQSREVEMSTRGRFQLTGDPAKGNCSLVIRDAQMQDESQYFFRVERGSYVRYNFMNDGFFLKVTALTQKPDVYIPETLEPGQPVTVICVFNWAFEECPPPSFSWTGAALSSQGTKPTTSHFSVLSFTPRPQDHNTDLTCHVDFSRKGVSAQRTVRLRVAYAPRDLVISISRDNTPALEPQPQGNVPYLEAQKGQFLRLLCAADSQPPATLSWVLQNRVLSSSHPWGPRPLGLELPGVKAGDSGRYTCRAENRLGSQQRALDLSVQYPPENLRVMVSQANRTVLENLGNGTSLPVLEGQSLCLVCVTHSSPPARLSWTQRGQVLSPSQPSDPGVLELPRVQVEHEGEFTCHARHPLGSQHVSLSLSVHYSPKLLGPSCSWEAEGLHCSCSSQASPAPSLRWWLGEELLEGNSSQDSFEVTPSSAGPWANSSLSLHGGLSSGLRLRCEAWNVHGAQSGSILQLPDKKGLISTAFSNGAFLGIGITALLFLCLALIIMKILPKRRTQTETPRPRFSRHSTILDYINVVPTAGPLAQKRNQKATPNSPRTPLPPGAPSPESKKNQKKQYQLPSFPEPKSSTQAPESQESQEELHYATLNFPGVRPRPEARMPKGTQADYAEVKFQ.

Positions 1-16 (MLLPLLLSSLLGGSQA) are cleaved as a signal peptide. At 17–550 (MDGRFWIRVQ…KGLISTAFSN (534 aa)) the chain is on the extracellular side. One can recognise an Ig-like V-type domain in the interval 18 to 121 (DGRFWIRVQE…DESQYFFRVE (104 aa)). 4 disulfide bridges follow: Cys-36–Cys-173, Cys-41–Cys-101, Cys-164–Cys-215, and Cys-276–Cys-323. Asn-100 is a glycosylation site (N-linked (GlcNAc...) asparagine). An N-acetylneuraminate-binding site is contributed by Arg-119. 3 consecutive Ig-like C2-type domains span residues 146 to 231 (PDVY…RTVR), 251 to 339 (PALE…LDLS), and 344 to 441 (PENL…LSLS). N-linked (GlcNAc...) asparagine glycosylation is found at Asn-355 and Asn-364. A disulfide bridge links Cys-380 with Cys-425. Asn-486 and Asn-504 each carry an N-linked (GlcNAc...) asparagine glycan. A helical membrane pass occupies residues 551-571 (GAFLGIGITALLFLCLALIIM). The Cytoplasmic segment spans residues 572–697 (KILPKRRTQT…QADYAEVKFQ (126 aa)). The ITIM motif 1 signature appears at 595–600 (LDYINV). Positions 606–697 (PLAQKRNQKA…QADYAEVKFQ (92 aa)) are disordered. Residues 620–629 (PRTPLPPGAP) show a composition bias toward pro residues. Residues 650-659 (KSSTQAPESQ) show a composition bias toward polar residues. Residues 665–670 (LHYATL) carry the ITIM motif 2 motif. Position 667 is a phosphotyrosine (Tyr-667).

It belongs to the immunoglobulin superfamily. SIGLEC (sialic acid binding Ig-like lectin) family. As to quaternary structure, interacts with PTPN6/SHP-1 upon phosphorylation. Interacts with NCF1. Interacts with CD24; the probable CD24:SIGLEC10 complex is proposed to inhibit HGMB1-mediated tissue damage immune response. Interacts with HMGB1; the interaction is dependent on CD24. Interacts with RIGI, CBL and PTPN11. In terms of processing, phosphorylation of Tyr-667 is involved in binding to PTPN6. Expressed by peripheral blood leukocytes (eosinophils, monocytes and a natural killer cell subpopulation). Isoform 5 is found to be the most abundant isoform. Found in lymph node, lung, ovary and appendix. Isoform 1 is found at high levels and isoform 2 at lower levels in bone marrow, spleen and spinal cord. Isoform 2 is also found in brain. Isoform 4 is specifically found in natural killer cells.

It localises to the cell membrane. Its subcellular location is the secreted. Functionally, putative adhesion molecule that mediates sialic-acid dependent binding to cells. Preferentially binds to alpha-2,3- or alpha-2,6-linked sialic acid. The sialic acid recognition site may be masked by cis interactions with sialic acids on the same cell surface. In the immune response, seems to act as an inhibitory receptor upon ligand induced tyrosine phosphorylation by recruiting cytoplasmic phosphatase(s) via their SH2 domain(s) that block signal transduction through dephosphorylation of signaling molecules. Involved in negative regulation of B-cell antigen receptor signaling. The inhibition of B cell activation is dependent on PTPN6/SHP-1. In association with CD24 may be involved in the selective suppression of the immune response to danger-associated molecular patterns (DAMPs) such as HMGB1, HSP70 and HSP90. In association with CD24 may regulate the immune repsonse of natural killer (NK) cells. Plays a role in the control of autoimmunity. During initiation of adaptive immune responses by CD8-alpha(+) dendritic cells inhibits cross-presentation by impairing the formation of MHC class I-peptide complexes. The function seems to implicate recruitment of PTPN6/SHP-1, which dephosphorylates NCF1 of the NADPH oxidase complex consequently promoting phagosomal acidification. The polypeptide is Sialic acid-binding Ig-like lectin 10 (SIGLEC10) (Homo sapiens (Human)).